Here is a 371-residue protein sequence, read N- to C-terminus: Queuine tRNA-ribosyltransferase (371 aa).

Catalysis depends on Asp90, which acts as the Proton acceptor. Substrate is bound by residues 90 to 94, Asp144, Gln189, and Gly215; that span reads DSGGF. An RNA binding region spans residues 246-252; that stretch reads GVGTPEN. Asp265 acts as the Nucleophile in catalysis. Residues 270-274 form an RNA binding; important for wobble base 34 recognition region; the sequence is TRNAR. Zn(2+)-binding residues include Cys303, Cys305, Cys308, and His334.

The protein belongs to the queuine tRNA-ribosyltransferase family. Homodimer. Within each dimer, one monomer is responsible for RNA recognition and catalysis, while the other monomer binds to the replacement base PreQ1. Requires Zn(2+) as cofactor.

The catalysed reaction is 7-aminomethyl-7-carbaguanine + guanosine(34) in tRNA = 7-aminomethyl-7-carbaguanosine(34) in tRNA + guanine. It participates in tRNA modification; tRNA-queuosine biosynthesis. Its function is as follows. Catalyzes the base-exchange of a guanine (G) residue with the queuine precursor 7-aminomethyl-7-deazaguanine (PreQ1) at position 34 (anticodon wobble position) in tRNAs with GU(N) anticodons (tRNA-Asp, -Asn, -His and -Tyr). Catalysis occurs through a double-displacement mechanism. The nucleophile active site attacks the C1' of nucleotide 34 to detach the guanine base from the RNA, forming a covalent enzyme-RNA intermediate. The proton acceptor active site deprotonates the incoming PreQ1, allowing a nucleophilic attack on the C1' of the ribose to form the product. After dissociation, two additional enzymatic reactions on the tRNA convert PreQ1 to queuine (Q), resulting in the hypermodified nucleoside queuosine (7-(((4,5-cis-dihydroxy-2-cyclopenten-1-yl)amino)methyl)-7-deazaguanosine). This chain is Queuine tRNA-ribosyltransferase, found in Helicobacter pylori (strain HPAG1).